Reading from the N-terminus, the 406-residue chain is Peptidase T (406 aa).

Histidine 81 lines the Zn(2+) pocket. Aspartate 83 is a catalytic residue. Residue aspartate 142 participates in Zn(2+) binding. The active-site Proton acceptor is glutamate 176. Zn(2+)-binding residues include glutamate 177, aspartate 199, and histidine 381.

Belongs to the peptidase M20B family. Requires Zn(2+) as cofactor.

It localises to the cytoplasm. It catalyses the reaction Release of the N-terminal residue from a tripeptide.. Its function is as follows. Cleaves the N-terminal amino acid of tripeptides. This chain is Peptidase T, found in Streptococcus pneumoniae serotype 2 (strain D39 / NCTC 7466).